We begin with the raw amino-acid sequence, 410 residues long: Histidine--tRNA ligase (410 aa).

It belongs to the class-II aminoacyl-tRNA synthetase family.

It is found in the cytoplasm. The enzyme catalyses tRNA(His) + L-histidine + ATP = L-histidyl-tRNA(His) + AMP + diphosphate + H(+). This Methanoculleus marisnigri (strain ATCC 35101 / DSM 1498 / JR1) protein is Histidine--tRNA ligase.